The chain runs to 283 residues: Phosphatidylglycerol--prolipoprotein diacylglyceryl transferase (283 aa).

4 helical membrane passes run 20–40, 60–80, 94–114, and 121–141; these read IGGFALRWYGFLIASAVIIGL, LVIWLVVAAIPSARLYYVAFE, IWQGGIAIHGALIGGTIAILV, and LSFWNLLDVLTPAVILGQAIG. Residue arginine 142 participates in a 1,2-diacyl-sn-glycero-3-phospho-(1'-sn-glycerol) binding. 3 helical membrane passes run 183–203, 214–234, and 248–268; these read FLYESVWNLGIFAILIALFFY, GTITCVYLIGYSLGRVWIEGL, and QVVSITLVLLGTAGIVWLYLL.

It belongs to the Lgt family.

Its subcellular location is the cell inner membrane. It carries out the reaction L-cysteinyl-[prolipoprotein] + a 1,2-diacyl-sn-glycero-3-phospho-(1'-sn-glycerol) = an S-1,2-diacyl-sn-glyceryl-L-cysteinyl-[prolipoprotein] + sn-glycerol 1-phosphate + H(+). Its pathway is protein modification; lipoprotein biosynthesis (diacylglyceryl transfer). Functionally, catalyzes the transfer of the diacylglyceryl group from phosphatidylglycerol to the sulfhydryl group of the N-terminal cysteine of a prolipoprotein, the first step in the formation of mature lipoproteins. The polypeptide is Phosphatidylglycerol--prolipoprotein diacylglyceryl transferase (Synechocystis sp. (strain ATCC 27184 / PCC 6803 / Kazusa)).